The chain runs to 76 residues: Parvalbumin beta 3 (76 aa).

A1 carries the N-acetylalanine modification. Residues 31 to 66 (KSPEEVKKFFAIIDQDHSGFIEEEELKLFLQTFSAG) form the EF-hand domain. D44, D46, S48, F50, E52, and E55 together coordinate Ca(2+).

This sequence belongs to the parvalbumin family.

In muscle, parvalbumin is thought to be involved in relaxation after contraction. It binds two calcium ions. This Merluccius polylepis (Southern hake) protein is Parvalbumin beta 3.